The chain runs to 436 residues: Trigger factor (436 aa).

Residues 161–246 (DDQLNIDFVG…VNSVAEPKLP (86 aa)) enclose the PPIase FKBP-type domain.

This sequence belongs to the FKBP-type PPIase family. Tig subfamily.

The protein localises to the cytoplasm. It carries out the reaction [protein]-peptidylproline (omega=180) = [protein]-peptidylproline (omega=0). Functionally, involved in protein export. Acts as a chaperone by maintaining the newly synthesized protein in an open conformation. Functions as a peptidyl-prolyl cis-trans isomerase. This Pseudomonas paraeruginosa (strain DSM 24068 / PA7) (Pseudomonas aeruginosa (strain PA7)) protein is Trigger factor.